The following is a 62-amino-acid chain: MTCCNQQSSQPKTTTTCAGGETSCYKKTWSDHRGSRTERGCGCPHVKPGIKLTCCKTDECNN.

Disulfide bonds link C3-C24, C17-C41, C43-C54, and C55-C60.

The protein belongs to the three-finger toxin family. Short-chain subfamily. Type I alpha-neurotoxin sub-subfamily. Expressed by the venom gland.

Its subcellular location is the secreted. Its function is as follows. Bird-specific neurotoxin (tested on chicken) that acts as pseudo-irreversible antagonists at the nicotinic acetylcholine receptor (nAChR) of the skeletal neuromuscular junction. Has no significant effect on the electrically-induced twitches of the rat isolated phrenic nerve-diaphragm preparation. The chain is Alpha-elapitoxin-Pc1 from Pseudechis colletti (Collett's snake).